A 397-amino-acid chain; its full sequence is Decapping and exoribonuclease protein (397 aa).

The span at 1–10 shows a compositional bias: basic residues; it reads MEPRGTKRKA. The interval 1–30 is disordered; the sequence is MEPRGTKRKAEKTEVEKPLNKLPRAVPSLR. Residues arginine 58, glutamate 101, and 131-133 contribute to the substrate site; that span reads WRG. Methionine 185 provides a ligand contact to adenosine 3',5'-bisphosphate. Glutamate 192 is a Mg(2+) binding site. Residues cysteine 217 and glutamate 234 each coordinate substrate. Positions 234, 236, 253, and 254 each coordinate Mg(2+). Aspartate 236 is a binding site for adenosine 3',5'-bisphosphate. Residues 253–256 are adenosine 3',5'-bisphosphate; inhibitor; sequence ELKT. Residues lysine 255 and glutamine 280 each coordinate substrate. Adenosine 3',5'-bisphosphate is bound at residue glutamine 280. At threonine 392 the chain carries Phosphothreonine. Phosphoserine is present on serine 394.

It belongs to the DXO/Dom3Z family. The cofactor is Mg(2+).

The protein resides in the nucleus. The enzyme catalyses a 5'-end triphospho-ribonucleoside in mRNA + H2O = a 5'-end phospho-ribonucleoside in mRNA + diphosphate + H(+). It catalyses the reaction a 5'-end NAD(+)-phospho-ribonucleoside in mRNA + H2O = a 5'-end phospho-ribonucleoside in mRNA + NAD(+) + H(+). The catalysed reaction is a 5'-end NAD(+)-phospho-ribonucleoside in snoRNA + H2O = a 5'-end phospho-ribonucleoside in snoRNA + NAD(+) + H(+). It carries out the reaction a 5'-end (N(7)-methyl 5'-triphosphoguanosine)-ribonucleoside-ribonucleotide in mRNA + H2O = a (N(7)-methyl 5'-triphosphoguanosine)-nucleoside + a 5'-end phospho-ribonucleoside in mRNA + H(+). The enzyme catalyses a 5'-end FAD-phospho-ribonucleoside in mRNA + H2O = a 5'-end phospho-ribonucleoside in mRNA + FAD + H(+). It catalyses the reaction a 5'-end CoA-ribonucleoside in mRNA + H2O = 3'-dephospho-CoA + a 5'-end phospho-ribonucleoside in mRNA + H(+). With respect to regulation, the 5'-3' exoribonuclease activity is inhibited by adenosine 3',5'-bisphosphate. Functionally, decapping enzyme for NAD-capped RNAs: specifically hydrolyzes the nicotinamide adenine dinucleotide (NAD) cap from a subset of RNAs by removing the entire NAD moiety from the 5'-end of an NAD-capped RNA. The NAD-cap is present at the 5'-end of some RNAs and snoRNAs. In contrast to the canonical 5'-end N7 methylguanosine (m7G) cap, the NAD cap promotes mRNA decay. Preferentially acts on NAD-capped transcripts in response to environmental stress. Also acts as a non-canonical decapping enzyme that removes the entire cap structure of m7G capped or incompletely capped RNAs and mediates their subsequent degradation. Specifically degrades pre-mRNAs with a defective 5'-end m7G cap and is part of a pre-mRNA capping quality control. Has decapping activity toward incomplete 5'-end m7G cap mRNAs such as unmethylated 5'-end-capped RNA (cap0), while it has no activity toward 2'-O-ribose methylated m7G cap (cap1). In contrast to canonical decapping enzymes DCP2 and NUDT16, which cleave the cap within the triphosphate linkage, the decapping activity releases the entire cap structure GpppN and a 5'-end monophosphate RNA. Also has 5'-3' exoribonuclease activities: The 5'-end monophosphate RNA is then degraded by the 5'-3' exoribonuclease activity, enabling this enzyme to decap and degrade incompletely capped mRNAs. Also possesses RNA 5'-pyrophosphohydrolase activity by hydrolyzing the 5'-end triphosphate to release pyrophosphates. Exhibits decapping activity towards FAD-capped RNAs. Exhibits decapping activity towards dpCoA-capped RNAs in vitro. The chain is Decapping and exoribonuclease protein from Mus musculus (Mouse).